The following is a 353-amino-acid chain: ATP-dependent kinase YFH7 (353 aa).

ATP is bound at residue 31–39; the sequence is GSPGSGKST.

It belongs to the YFH7 family.

Functionally, ATP-dependent kinase that could be involved in endoplasmic reticulum membrane assembly. This Saccharomyces cerevisiae (strain JAY291) (Baker's yeast) protein is ATP-dependent kinase YFH7 (YFH7).